Consider the following 190-residue polypeptide: Movement protein TGB3 (190 aa).

The Cytoplasmic segment spans residues 1-52; the sequence is MDPPVILHSPNCSCQFCSSELPSTHTCGSQDRTVPLHVEATAAGHMEAKNFS. Residues 53–73 traverse the membrane as a helical segment; it reads LQYVLLVAFVSVLLGFSFCVY. The Lumenal segment spans residues 74-166; it reads LKSMSNDEAS…TPCENNVLLK (93 aa). Residues Tyr89 and Tyr120 each carry the phosphotyrosine modification. An Involved in plasmodesmata targeting and virus cell-to-cell movement motif is present at residues 89 to 93; the sequence is YQDLN. A helical membrane pass occupies residues 167–187; it reads LWKDDLSFTIIAVTVLVGAML. Topologically, residues 188-190 are cytoplasmic; that stretch reads ARC.

This sequence belongs to the virgaviridae TGB3 movement protein family. Interacts with movement protein TGB2. TGB1-TGB3-TGB2 complex formation is enhanced by ATP hydrolysis.

It is found in the host cell junction. It localises to the host plasmodesma. Its subcellular location is the host endoplasmic reticulum membrane. The protein resides in the host cytoplasm. The protein localises to the host cytoskeleton. Functionally, participates in the transport of viral genome to neighboring plant cells directly through plasmodesmata, without any budding. TGBp2 and TGBp3 are necessary for intracellular delivery of TGBp1-containing vRNPs to plasmodesmata. Can gate plasmodesmata and increase their size exclusion limit. Induces host actin cytoskeleton network thickening, which probably plays a major role in virus cell-to-cell movement. The polypeptide is Movement protein TGB3 (Solanum nigrum (Black nightshade)).